The following is a 152-amino-acid chain: MRLRVLWVGKSREEWVKQALADYATRIRRYAPLELVEVRDEKGAMAEEMRRRECERLEKQIPPGATLLLLDERGEQMDSPGLAAYIGKQRDSGTADLVLVIGGAYGFSDAFRRRGRLLSLSPMTFTHQMVRVFLLEQLYRSFTILNNEPYHH.

S-adenosyl-L-methionine-binding positions include leucine 70, glycine 102, and 120–125; that span reads LSPMTF.

The protein belongs to the RNA methyltransferase RlmH family. Homodimer.

It is found in the cytoplasm. The catalysed reaction is pseudouridine(1915) in 23S rRNA + S-adenosyl-L-methionine = N(3)-methylpseudouridine(1915) in 23S rRNA + S-adenosyl-L-homocysteine + H(+). Specifically methylates the pseudouridine at position 1915 (m3Psi1915) in 23S rRNA. The chain is Ribosomal RNA large subunit methyltransferase H from Pelobacter propionicus (strain DSM 2379 / NBRC 103807 / OttBd1).